A 235-amino-acid chain; its full sequence is Phosphoribosylaminoimidazole-succinocarboxamide synthase (235 aa).

The protein belongs to the SAICAR synthetase family.

The enzyme catalyses 5-amino-1-(5-phospho-D-ribosyl)imidazole-4-carboxylate + L-aspartate + ATP = (2S)-2-[5-amino-1-(5-phospho-beta-D-ribosyl)imidazole-4-carboxamido]succinate + ADP + phosphate + 2 H(+). It functions in the pathway purine metabolism; IMP biosynthesis via de novo pathway; 5-amino-1-(5-phospho-D-ribosyl)imidazole-4-carboxamide from 5-amino-1-(5-phospho-D-ribosyl)imidazole-4-carboxylate: step 1/2. This is Phosphoribosylaminoimidazole-succinocarboxamide synthase from Chloroherpeton thalassium (strain ATCC 35110 / GB-78).